We begin with the raw amino-acid sequence, 212 residues long: Small ribosomal subunit protein eS1 (212 aa).

This sequence belongs to the eukaryotic ribosomal protein eS1 family.

This is Small ribosomal subunit protein eS1 from Haloquadratum walsbyi (strain DSM 16790 / HBSQ001).